A 233-amino-acid chain; its full sequence is 5'-methylthioadenosine/S-adenosylhomocysteine nucleosidase (233 aa).

Glu-12 serves as the catalytic Proton acceptor. Substrate is bound by residues Gly-78, Ile-153, and 174-175 (ME). Asp-198 functions as the Proton donor in the catalytic mechanism.

It belongs to the PNP/UDP phosphorylase family. MtnN subfamily.

The enzyme catalyses S-adenosyl-L-homocysteine + H2O = S-(5-deoxy-D-ribos-5-yl)-L-homocysteine + adenine. It carries out the reaction S-methyl-5'-thioadenosine + H2O = 5-(methylsulfanyl)-D-ribose + adenine. It catalyses the reaction 5'-deoxyadenosine + H2O = 5-deoxy-D-ribose + adenine. It participates in amino-acid biosynthesis; L-methionine biosynthesis via salvage pathway; S-methyl-5-thio-alpha-D-ribose 1-phosphate from S-methyl-5'-thioadenosine (hydrolase route): step 1/2. Functionally, catalyzes the irreversible cleavage of the glycosidic bond in both 5'-methylthioadenosine (MTA) and S-adenosylhomocysteine (SAH/AdoHcy) to adenine and the corresponding thioribose, 5'-methylthioribose and S-ribosylhomocysteine, respectively. Also cleaves 5'-deoxyadenosine, a toxic by-product of radical S-adenosylmethionine (SAM) enzymes, into 5-deoxyribose and adenine. This chain is 5'-methylthioadenosine/S-adenosylhomocysteine nucleosidase, found in Exiguobacterium sp. (strain ATCC BAA-1283 / AT1b).